Reading from the N-terminus, the 332-residue chain is Ketol-acid reductoisomerase (NADP(+)) (332 aa).

A KARI N-terminal Rossmann domain is found at 1–182; that stretch reads MAVIYYDKDC…GSNRAGVLET (182 aa). NADP(+) contacts are provided by residues 25-28 and 83-86; these read YGAQ and DTSQ. Residue H108 is part of the active site. NADP(+) is bound at residue G134. The KARI C-terminal knotted domain occupies 183 to 328; the sequence is TFAEETETDL…AELRSMMSWL (146 aa). The Mg(2+) site is built by D191, E195, E227, and E231. A substrate-binding site is contributed by S252.

This sequence belongs to the ketol-acid reductoisomerase family. It depends on Mg(2+) as a cofactor.

The catalysed reaction is (2R)-2,3-dihydroxy-3-methylbutanoate + NADP(+) = (2S)-2-acetolactate + NADPH + H(+). The enzyme catalyses (2R,3R)-2,3-dihydroxy-3-methylpentanoate + NADP(+) = (S)-2-ethyl-2-hydroxy-3-oxobutanoate + NADPH + H(+). It functions in the pathway amino-acid biosynthesis; L-isoleucine biosynthesis; L-isoleucine from 2-oxobutanoate: step 2/4. The protein operates within amino-acid biosynthesis; L-valine biosynthesis; L-valine from pyruvate: step 2/4. Involved in the biosynthesis of branched-chain amino acids (BCAA). Catalyzes an alkyl-migration followed by a ketol-acid reduction of (S)-2-acetolactate (S2AL) to yield (R)-2,3-dihydroxy-isovalerate. In the isomerase reaction, S2AL is rearranged via a Mg-dependent methyl migration to produce 3-hydroxy-3-methyl-2-ketobutyrate (HMKB). In the reductase reaction, this 2-ketoacid undergoes a metal-dependent reduction by NADPH to yield (R)-2,3-dihydroxy-isovalerate. The chain is Ketol-acid reductoisomerase (NADP(+)) from Dehalococcoides mccartyi (strain ATCC BAA-2266 / KCTC 15142 / 195) (Dehalococcoides ethenogenes (strain 195)).